The following is a 115-amino-acid chain: Parathyroid hormone (115 aa).

A signal peptide spans 1 to 25; it reads MMSASTMAKVMILMLAVCLLTQADG. The propeptide occupies 26–31; that stretch reads KPVKKR. Residues 51-69 are important for receptor binding; the sequence is RMQWLRKKLQDVHNFVSLG. Residues 76–101 are disordered; sequence EGSYQRPTKKEENVLVDGNSKSLGEG.

Belongs to the parathyroid hormone family. Interacts with PTH1R (via N-terminal extracellular domain). In terms of tissue distribution, hypothalamus and parathyroid gland.

Its subcellular location is the secreted. Parathyroid hormone elevates calcium level by dissolving the salts in bone and preventing their renal excretion. Acts by binding to its receptor, PTH1R, activating G protein-coupled receptor signaling. Stimulates [1-14C]-2-deoxy-D-glucose (2DG) transport and glycogen synthesis in osteoblastic cells. The chain is Parathyroid hormone (Pth) from Rattus norvegicus (Rat).